The primary structure comprises 62 residues: Photosystem II reaction center protein Z (62 aa).

A run of 2 helical transmembrane segments spans residues 8 to 28 and 41 to 61; these read ALIS…VAYA and WLGS…NFFV.

The protein belongs to the PsbZ family. As to quaternary structure, PSII is composed of 1 copy each of membrane proteins PsbA, PsbB, PsbC, PsbD, PsbE, PsbF, PsbH, PsbI, PsbJ, PsbK, PsbL, PsbM, PsbT, PsbX, PsbY, PsbZ, Psb30/Ycf12, peripheral proteins PsbO, CyanoQ (PsbQ), PsbU, PsbV and a large number of cofactors. It forms dimeric complexes.

Its subcellular location is the cellular thylakoid membrane. May control the interaction of photosystem II (PSII) cores with the light-harvesting antenna, regulates electron flow through the 2 photosystem reaction centers. PSII is a light-driven water plastoquinone oxidoreductase, using light energy to abstract electrons from H(2)O, generating a proton gradient subsequently used for ATP formation. This chain is Photosystem II reaction center protein Z, found in Trichormus variabilis (strain ATCC 29413 / PCC 7937) (Anabaena variabilis).